Consider the following 182-residue polypeptide: uncharacterized protein (182 aa).

The 177-residue stretch at Met1–Leu177 folds into the Macro domain.

This is an uncharacterized protein from Pyrobaculum aerophilum (strain ATCC 51768 / DSM 7523 / JCM 9630 / CIP 104966 / NBRC 100827 / IM2).